The chain runs to 1717 residues: Protein MON2 homolog (1717 aa).

At S2 the chain carries N-acetylserine. A phosphoserine mark is found at S205 and S537. A disordered region spans residues 511 to 538 (ETECQTTTEEGSSPTQSTEQQDLQSTSD). The segment covering 522–538 (SSPTQSTEQQDLQSTSD) has biased composition (polar residues).

It belongs to the MON2 family. As to quaternary structure, homooligomer. Heterotrimer with ATP9A and DOP1B; this interaction is retromer-independent. Interacts with SNX3.

The protein resides in the early endosome membrane. Functionally, plays a role in regulating membrane trafficking of cargo proteins. Together with ATP9A and DOP1B, regulates SNX3 retromer-mediated endosomal sorting of WLS away from lysosomal degradation. This is Protein MON2 homolog from Homo sapiens (Human).